Reading from the N-terminus, the 137-residue chain is Putative pre-16S rRNA nuclease (137 aa).

Belongs to the YqgF nuclease family.

The protein localises to the cytoplasm. In terms of biological role, could be a nuclease involved in processing of the 5'-end of pre-16S rRNA. In Anaeromyxobacter sp. (strain K), this protein is Putative pre-16S rRNA nuclease.